The sequence spans 325 residues: MTASSVLLHTGQKMPLIGLGTWKSEPGQVKAAIKYALSVGYRHIDCASVYGNETEIGEALKESVGAGKAVPREELFVTSKLWNTKHHPEDVEPAVRKTLADLQLEYLDLYLMHWPYAFERGDNPFPKNADGTVKYDSTHYKETWKALEALVAKGLVKALGLSNFSSRQIDDVLSVASVRPAVLQVECHPYLAQNELIAHCQARGLEVTAYSPLGSSDRAWRHPDEPVLLEEPVVLALAEKHGRSPAQILLRWQVQRKVICIPKSITPSRILQNIQVFDFTFSPEEMKQLDALNKNWRYIVPMITVDGKRVPRDAGHPLYPFNDPY.

At threonine 2 the chain carries N-acetylthreonine. Serine 4 is modified (phosphoserine). Residues 11–20 (GQKMPLIGLG), threonine 21, and tryptophan 22 contribute to the NADP(+) site. Lysine 23 carries N-linked (Glc) (glycation) lysine glycosylation. A Phosphoserine modification is found at serine 38. Aspartate 45 is an NADP(+) binding site. The active-site Proton donor is tyrosine 50. Residues lysine 68 and lysine 85 are each glycosylated (N-linked (Glc) (glycation) lysine). Lysine 127 carries the N6-acetyllysine; alternate modification. Lysine 127 is modified (N6-succinyllysine; alternate). An N-linked (Glc) (glycation) lysine glycan is attached at lysine 141. Lysine 145 is modified (N6-succinyllysine). Residue lysine 153 is glycosylated (N-linked (Glc) (glycation) lysine). Positions 162, 163, 211, 213, 215, 216, 263, 264, 265, 266, 269, 272, and 273 each coordinate NADP(+). Position 211 is a phosphoserine (serine 211).

Belongs to the aldo/keto reductase family. As to quaternary structure, monomer. In terms of tissue distribution, widely expressed.

It localises to the cytoplasm. The protein resides in the cytosol. It is found in the apical cell membrane. The enzyme catalyses a primary alcohol + NADP(+) = an aldehyde + NADPH + H(+). It catalyses the reaction L-gulonate + NADP(+) = aldehydo-D-glucuronate + NADPH + H(+). It carries out the reaction L-gulono-1,4-lactone + NADP(+) = D-glucurono-3,6-lactone + NADPH + H(+). The catalysed reaction is allyl alcohol + NADP(+) = acrolein + NADPH + H(+). The enzyme catalyses glycerol + NADP(+) = D-glyceraldehyde + NADPH + H(+). It catalyses the reaction glycerol + NADP(+) = L-glyceraldehyde + NADPH + H(+). It carries out the reaction hydroxyacetone + NADP(+) = methylglyoxal + NADPH + H(+). The catalysed reaction is 3-deoxyfructose + NADP(+) = 3-deoxyglucosone + NADPH + H(+). The enzyme catalyses (R)-mevalonate + NADP(+) = (R)-mevaldate + NADPH + H(+). It catalyses the reaction pyridine 3-methanol + NADP(+) = pyridine-3-carbaldehyde + NADPH + H(+). It carries out the reaction S-nitroso-CoA + NADPH + H(+) = sulfinamide-CoA + NADP(+). The catalysed reaction is S-nitrosoglutathione + NADPH + H(+) = S-(hydroxysulfenamide)glutathione + NADP(+). Functionally, catalyzes the NADPH-dependent reduction of a wide variety of carbonyl-containing compounds to their corresponding alcohols. Displays enzymatic activity towards endogenous metabolites such as aromatic and aliphatic aldehydes, ketones, monosaccharides and bile acids. Plays an important role in ascorbic acid biosynthesis by catalyzing the reduction of D-glucuronic acid and D-glucurono-gamma-lactone. Functions as a detoxifiying enzyme by reducing a range of toxic aldehydes. Reduces methylglyoxal and 3-deoxyglucosone, which are present at elevated levels under hyperglycemic conditions and are cytotoxic. Involved also in the detoxification of lipid-derived aldehydes like acrolein. Plays a role in the activation of procarcinogens, such as polycyclic aromatic hydrocarbon trans-dihydrodiols, and in the metabolism of various xenobiotics and drugs. Also acts as an inhibitor of protein S-nitrosylation by mediating degradation of S-nitroso-coenzyme A (S-nitroso-CoA), a cofactor required to S-nitrosylate proteins. S-nitroso-CoA reductase activity is involved in reprogramming intermediary metabolism in renal proximal tubules, notably by inhibiting protein S-nitrosylation of isoform 2 of PKM (PKM2). Also acts as a S-nitroso-glutathione reductase by catalyzing the NADPH-dependent reduction of S-nitrosoglutathione. Displays no reductase activity towards retinoids. The polypeptide is Aldo-keto reductase family 1 member A1 (Akr1a1) (Rattus norvegicus (Rat)).